Here is a 443-residue protein sequence, read N- to C-terminus: Large ribosomal subunit protein mL50 (443 aa).

Residues 121-145 form a disordered region; it reads QPTRADAPEKIRDPNYEPATSGAGL. The segment covering 126–135 has biased composition (basic and acidic residues); that stretch reads DAPEKIRDPN.

It belongs to the mitochondrion-specific ribosomal protein mL50 family. In terms of assembly, component of the mitochondrial large ribosomal subunit (mt-LSU). Mature N.crassa 74S mitochondrial ribosomes consist of a small (37S) and a large (54S) subunit. The 37S small subunit contains a 16S ribosomal RNA (16S mt-rRNA) and 32 different proteins. The 54S large subunit contains a 23S rRNA (23S mt-rRNA) and 42 different proteins.

It is found in the mitochondrion. In terms of biological role, component of the mitochondrial ribosome (mitoribosome), a dedicated translation machinery responsible for the synthesis of mitochondrial genome-encoded proteins, including at least some of the essential transmembrane subunits of the mitochondrial respiratory chain. The mitoribosomes are attached to the mitochondrial inner membrane and translation products are cotranslationally integrated into the membrane. The protein is Large ribosomal subunit protein mL50 (mrpl13) of Neurospora crassa (strain ATCC 24698 / 74-OR23-1A / CBS 708.71 / DSM 1257 / FGSC 987).